The sequence spans 381 residues: Deoxyguanosinetriphosphate triphosphohydrolase-like protein (381 aa).

In terms of domain architecture, HD spans 76 to 203; it reads RMTHTLEVAG…ADLSDEIAYT (128 aa).

This sequence belongs to the dGTPase family. Type 2 subfamily.

The polypeptide is Deoxyguanosinetriphosphate triphosphohydrolase-like protein (Leptospira interrogans serogroup Icterohaemorrhagiae serovar copenhageni (strain Fiocruz L1-130)).